Reading from the N-terminus, the 323-residue chain is Transcriptional regulator protein Pur-beta-A (323 aa).

Disordered regions lie at residues 1–34 (MADGDSGSERGGSSGGPGGFSQHMSREQETQELA), 100–122 (SPEQIAQASGEDGAGGPGGPRRA), and 286–323 (QERQRDKMYERRGPGDRERSLGPGGGGDDSETEDVDDD). A2 carries the post-translational modification N-acetylalanine. Over residues 9–19 (ERGGSSGGPGG) the composition is skewed to gly residues. Over residues 24 to 34 (MSREQETQELA) the composition is skewed to basic and acidic residues. The segment at 27–257 (EQETQELATK…LRVSEVKPSY (231 aa)) is DNA-binding. The segment covering 286–305 (QERQRDKMYERRGPGDRERS) has biased composition (basic and acidic residues). The span at 313-323 (DDSETEDVDDD) shows a compositional bias: acidic residues.

The protein belongs to the PUR DNA-binding protein family.

The protein localises to the nucleus. In terms of biological role, transcriptional regulator which can act as an activator or a repressor. The protein is Transcriptional regulator protein Pur-beta-A (purb-a) of Xenopus laevis (African clawed frog).